A 313-amino-acid chain; its full sequence is D-alanine--D-alanine ligase (313 aa).

The ATP-grasp domain maps to 111–306 (KQVWHSLGLP…FQQLVLAILA (196 aa)). 137-192 (AAELGFPLIVKPAHEGSSIGMAKVESVEALIAAWQDAARYDSQVLVEQWIAGPEYT) is an ATP binding site. 3 residues coordinate Mg(2+): Asp-260, Glu-273, and Asn-275.

It belongs to the D-alanine--D-alanine ligase family. Mg(2+) is required as a cofactor. Requires Mn(2+) as cofactor.

The protein resides in the cytoplasm. It carries out the reaction 2 D-alanine + ATP = D-alanyl-D-alanine + ADP + phosphate + H(+). The protein operates within cell wall biogenesis; peptidoglycan biosynthesis. Cell wall formation. The chain is D-alanine--D-alanine ligase from Ectopseudomonas mendocina (strain ymp) (Pseudomonas mendocina).